The sequence spans 161 residues: 3-hydroxyacyl-[acyl-carrier-protein] dehydratase FabZ (161 aa).

His64 is a catalytic residue.

This sequence belongs to the thioester dehydratase family. FabZ subfamily.

Its subcellular location is the cytoplasm. The enzyme catalyses a (3R)-hydroxyacyl-[ACP] = a (2E)-enoyl-[ACP] + H2O. Involved in unsaturated fatty acids biosynthesis. Catalyzes the dehydration of short chain beta-hydroxyacyl-ACPs and long chain saturated and unsaturated beta-hydroxyacyl-ACPs. In Paramagnetospirillum magneticum (strain ATCC 700264 / AMB-1) (Magnetospirillum magneticum), this protein is 3-hydroxyacyl-[acyl-carrier-protein] dehydratase FabZ.